We begin with the raw amino-acid sequence, 660 residues long: Histone deacetylase 5 (660 aa).

A2 carries the post-translational modification N-acetylalanine. The interval 26–349 (KVGLIYDETM…SLACVQVLLE (324 aa)) is histone deacetylase. H158 functions as the Proton donor/acceptor in the catalytic mechanism. 3 residues coordinate Zn(2+): D198, H200, and D291.

It belongs to the histone deacetylase family. HD type 2 subfamily. In terms of assembly, interacts with HDA6. The cofactor is Zn(2+). In terms of tissue distribution, expressed in stems, leaves, flowers, siliques and mature seeds.

It is found in the nucleus. The protein resides in the cytoplasm. It catalyses the reaction N(6)-acetyl-L-lysyl-[histone] + H2O = L-lysyl-[histone] + acetate. Its activity is regulated as follows. Inhibited by trichostatin A (TSA), a well-known histone deacetylase inhibitor. In terms of biological role, responsible for the deacetylation of lysine residues on the N-terminal part of the core histones (H2A, H2B, H3 and H4). Histone deacetylation gives a tag for epigenetic repression and plays an important role in transcriptional regulation, cell cycle progression and developmental events. Histone deacetylases act via the formation of large multiprotein complexes. Involved in the regulation of flowering time by repressing FLC and AGL27/MAF1 expression. Forms a histone deacetylase complex with HDA6, FLD and MSI4/FVE that represses FLC gene expression to control flowering time. Unlike its tandem duplication HDA18, HDA5 does not seem to be required for the cellular patterning in the root epidermis. The sequence is that of Histone deacetylase 5 from Arabidopsis thaliana (Mouse-ear cress).